The sequence spans 417 residues: Phosphoglycerate kinase 1 (417 aa).

The residue at position 2 (S2) is an N-acetylserine. Residues S2 and S4 each carry the phosphoserine modification. An N6-succinyllysine modification is found at K6. K11 carries the N6-acetyllysine modification. Residues V23, D24, F25, N26, Q38, and R39 each coordinate (2R)-3-phosphoglycerate. The tract at residues 38–43 (QRIKAA) is mitochondrial targeting region exposed following cis-trans isomerization by PIN1 and recognized by the TOM complex for mitochondrial translocation of the protein. At K48 the chain carries N6-acetyllysine; alternate. Residue K48 is modified to N6-succinyllysine; alternate. S62, H63, G65, and R66 together coordinate (2R)-3-phosphoglycerate. K75 carries the post-translational modification N6-acetyllysine. Y76 carries the phosphotyrosine modification. K86 and K91 each carry N6-acetyllysine. K97 is modified (N6-acetyllysine; alternate). K97 bears the N6-(2-hydroxyisobutyryl)lysine; alternate mark. Residues L122 and R123 each contribute to the (2R)-3-phosphoglycerate site. The residue at position 131 (K131) is an N6-acetyllysine; alternate. K131 carries the N6-malonyllysine; alternate modification. K146 is modified (N6-acetyllysine). Positions 170 and 171 each coordinate (2R)-3-phosphoglycerate. N6-succinyllysine is present on K191. Y196 bears the Phosphotyrosine mark. K199 carries the N6-acetyllysine modification. S203 is subject to Phosphoserine. Position 214 (G214) interacts with ADP. A CDP-binding site is contributed by G214. Residues A215 and K216 each contribute to the AMP site. Residue A215 coordinates ATP. A215 is a binding site for Mg(2+). The residue at position 216 (K216) is an N6-(2-hydroxyisobutyryl)lysine. A218 and D219 together coordinate Mg(2+). D219 serves as a coordination point for CDP. Residue K220 participates in AMP binding. K220 serves as a coordination point for ATP. K220 is subject to N6-(2-hydroxyisobutyryl)lysine. G238 lines the ADP pocket. G238 contributes to the CDP binding site. G239 is an AMP binding site. Residue G239 coordinates ATP. N6-acetyllysine occurs at positions 267 and 291. G313 serves as a coordination point for AMP. Position 313 (G313) interacts with ATP. K323 carries the N6-(2-hydroxyisobutyryl)lysine modification. G338, V340, and F343 together coordinate CDP. F343 lines the ADP pocket. Position 344 (E344) interacts with AMP. Residue E344 participates in ATP binding. K361 carries the post-translational modification N6-acetyllysine. 2 residues coordinate ATP: D375 and T376. D375 contacts Mg(2+).

It belongs to the phosphoglycerate kinase family. Monomer. Interacts with kinase MAPK1/ERK2; the interaction is direct, occurs under hypoxic conditions, and promotes its interaction with PIN1. Interacts with peptidyl-prolyl cis-trans isomerase PIN1; the interaction is direct, occurs under hypoxic conditions, and targets the protein to the mitochondrion by promoting interactions with the TOM complex. Interacts with mitochondrial circRNA mcPGK1 (via its 2nd stem-loop); the interaction is direct and targets the protein to the mitochondrion by promoting interactions with the TOM complex. Interacts with pyruvate dehydrogenase kinase PDK1; the interaction is direct, occurs under hypoxic conditions and leads to PDK1-mediated inhibition of pyruvate dehydrogenase complex activity. Mg(2+) is required as a cofactor. Phosphorylated at Ser-203 by MAPK1/ERK2 under hypoxic conditions, which promotes its mitochondrial targeting.

It localises to the cytoplasm. Its subcellular location is the cytosol. It is found in the mitochondrion matrix. It carries out the reaction (2R)-3-phosphoglycerate + ATP = (2R)-3-phospho-glyceroyl phosphate + ADP. The catalysed reaction is L-seryl-[protein] + ATP = O-phospho-L-seryl-[protein] + ADP + H(+). It functions in the pathway carbohydrate degradation; glycolysis; pyruvate from D-glyceraldehyde 3-phosphate: step 2/5. In terms of biological role, catalyzes one of the two ATP producing reactions in the glycolytic pathway via the reversible conversion of 1,3-diphosphoglycerate to 3-phosphoglycerate. Both L- and D- forms of purine and pyrimidine nucleotides can be used as substrates, but the activity is much lower on pyrimidines. In addition to its role as a glycolytic enzyme, it seems that PGK-1 acts as a polymerase alpha cofactor protein (primer recognition protein). Acts as a protein kinase when localized to the mitochondrion where it phosphorylates pyruvate dehydrogenase kinase PDK1 to inhibit pyruvate dehydrogenase complex activity and suppress the formation of acetyl-coenzyme A from pyruvate, and consequently inhibit oxidative phosphorylation and promote glycolysis. May play a role in sperm motility. The protein is Phosphoglycerate kinase 1 (PGK1) of Sus scrofa (Pig).